We begin with the raw amino-acid sequence, 211 residues long: 3,4-dihydroxy-2-butanone 4-phosphate synthase (211 aa).

D-ribulose 5-phosphate is bound by residues 37–38 (RE), Asp42, 150–154 (RIGHT), and Glu174. Mg(2+) is bound at residue Glu38. A Mg(2+)-binding site is contributed by His153.

This sequence belongs to the DHBP synthase family. In terms of assembly, homodimer. Mg(2+) is required as a cofactor. Mn(2+) serves as cofactor.

The enzyme catalyses D-ribulose 5-phosphate = (2S)-2-hydroxy-3-oxobutyl phosphate + formate + H(+). It participates in cofactor biosynthesis; riboflavin biosynthesis; 2-hydroxy-3-oxobutyl phosphate from D-ribulose 5-phosphate: step 1/1. Catalyzes the conversion of D-ribulose 5-phosphate to formate and 3,4-dihydroxy-2-butanone 4-phosphate. The protein is 3,4-dihydroxy-2-butanone 4-phosphate synthase of Buchnera aphidicola subsp. Baizongia pistaciae (strain Bp).